The chain runs to 246 residues: 23S rRNA (guanosine-2'-O-)-methyltransferase RlmB (246 aa).

Gly197, Ile217, and Leu226 together coordinate S-adenosyl-L-methionine.

The protein belongs to the class IV-like SAM-binding methyltransferase superfamily. RNA methyltransferase TrmH family. RlmB subfamily.

It is found in the cytoplasm. The enzyme catalyses guanosine(2251) in 23S rRNA + S-adenosyl-L-methionine = 2'-O-methylguanosine(2251) in 23S rRNA + S-adenosyl-L-homocysteine + H(+). Functionally, specifically methylates the ribose of guanosine 2251 in 23S rRNA. This chain is 23S rRNA (guanosine-2'-O-)-methyltransferase RlmB, found in Haemophilus influenzae (strain ATCC 51907 / DSM 11121 / KW20 / Rd).